Consider the following 157-residue polypeptide: Small ribosomal subunit protein uS7cz/uS7cy (157 aa).

The protein belongs to the universal ribosomal protein uS7 family. As to quaternary structure, part of the 30S ribosomal subunit.

The protein localises to the plastid. Its subcellular location is the chloroplast. Its function is as follows. One of the primary rRNA binding proteins, it binds directly to 16S rRNA where it nucleates assembly of the head domain of the 30S subunit. The chain is Small ribosomal subunit protein uS7cz/uS7cy (rps7-A) from Welwitschia mirabilis (Tree tumbo).